The sequence spans 357 residues: Membrane-bound lytic murein transglycosylase C (357 aa).

The signal sequence occupies residues 1–16 (MKKMLALLVIAPLLVS). Cys-17 carries the N-palmitoyl cysteine lipid modification. Residue Cys-17 is the site of S-diacylglycerol cysteine attachment.

The protein belongs to the transglycosylase Slt family.

It is found in the cell outer membrane. The enzyme catalyses Exolytic cleavage of the (1-&gt;4)-beta-glycosidic linkage between N-acetylmuramic acid (MurNAc) and N-acetylglucosamine (GlcNAc) residues in peptidoglycan, from either the reducing or the non-reducing ends of the peptidoglycan chains, with concomitant formation of a 1,6-anhydrobond in the MurNAc residue.. Functionally, murein-degrading enzyme. May play a role in recycling of muropeptides during cell elongation and/or cell division. This Pectobacterium atrosepticum (strain SCRI 1043 / ATCC BAA-672) (Erwinia carotovora subsp. atroseptica) protein is Membrane-bound lytic murein transglycosylase C.